The following is a 347-amino-acid chain: Ribosomal RNA small subunit methyltransferase C (347 aa).

Belongs to the methyltransferase superfamily. RsmC family. In terms of assembly, monomer.

Its subcellular location is the cytoplasm. The enzyme catalyses guanosine(1207) in 16S rRNA + S-adenosyl-L-methionine = N(2)-methylguanosine(1207) in 16S rRNA + S-adenosyl-L-homocysteine + H(+). In terms of biological role, specifically methylates the guanine in position 1207 of 16S rRNA in the 30S particle. In Yersinia pseudotuberculosis serotype IB (strain PB1/+), this protein is Ribosomal RNA small subunit methyltransferase C.